Here is a 246-residue protein sequence, read N- to C-terminus: TATA-box-binding protein (246 aa).

The tract at residues 1-27 (MSSDKTSQQTFKLAPNNSVAQSNSIDQ) is disordered. 2 tandem repeats follow at residues 53-129 (LQNI…AKII) and 143-220 (IQNI…YWVL).

It belongs to the TBP family. Belongs to the TFIID complex together with the TBP-associated factors (TAFs). Binds DNA as monomer.

The protein localises to the nucleus. General transcription factor that functions at the core of the DNA-binding multiprotein factor TFIID. Binding of TFIID to the TATA box is the initial transcriptional step of the pre-initiation complex (PIC), playing a role in the activation of eukaryotic genes transcribed by RNA polymerase II. In Tetrahymena thermophila, this protein is TATA-box-binding protein.